We begin with the raw amino-acid sequence, 103 residues long: MYAVIETGGKQYKVQEGDVLFIEKLANEEGSTVTFDKVVAVSKDDKVSFGTPFVSNASVTAKVLCHGKGKKIIVFKYKPKKGYRRKQGHRQPYTKIQIEKINA.

This sequence belongs to the bacterial ribosomal protein bL21 family. As to quaternary structure, part of the 50S ribosomal subunit. Contacts protein L20.

Functionally, this protein binds to 23S rRNA in the presence of protein L20. The chain is Large ribosomal subunit protein bL21 from Acetivibrio thermocellus (strain ATCC 27405 / DSM 1237 / JCM 9322 / NBRC 103400 / NCIMB 10682 / NRRL B-4536 / VPI 7372) (Clostridium thermocellum).